The sequence spans 796 residues: Phenylalanine--tRNA ligase beta subunit (796 aa).

Positions 39–149 (SAALKSFRVA…GDAPLGTTFA (111 aa)) constitute a tRNA-binding domain. The 73-residue stretch at 398 to 470 (LARKALAYDP…RVHGLDAVPS (73 aa)) folds into the B5 domain. Residues Asp-448, Asp-454, Glu-457, and Glu-458 each contribute to the Mg(2+) site. The 93-residue stretch at 703–795 (PALQAVTRDF…AAGKLGAELR (93 aa)) folds into the FDX-ACB domain.

It belongs to the phenylalanyl-tRNA synthetase beta subunit family. Type 1 subfamily. In terms of assembly, tetramer of two alpha and two beta subunits. It depends on Mg(2+) as a cofactor.

The protein localises to the cytoplasm. It catalyses the reaction tRNA(Phe) + L-phenylalanine + ATP = L-phenylalanyl-tRNA(Phe) + AMP + diphosphate + H(+). The polypeptide is Phenylalanine--tRNA ligase beta subunit (Novosphingobium aromaticivorans (strain ATCC 700278 / DSM 12444 / CCUG 56034 / CIP 105152 / NBRC 16084 / F199)).